The following is a 256-amino-acid chain: Indole-3-glycerol phosphate synthase (256 aa).

Belongs to the TrpC family.

The catalysed reaction is 1-(2-carboxyphenylamino)-1-deoxy-D-ribulose 5-phosphate + H(+) = (1S,2R)-1-C-(indol-3-yl)glycerol 3-phosphate + CO2 + H2O. The protein operates within amino-acid biosynthesis; L-tryptophan biosynthesis; L-tryptophan from chorismate: step 4/5. The chain is Indole-3-glycerol phosphate synthase from Pelodictyon phaeoclathratiforme (strain DSM 5477 / BU-1).